Here is an 89-residue protein sequence, read N- to C-terminus: MALSVEEKAQIVAEYQQAAGDTGSPEVQVALLTANINKLQGHFKANEKDHHSRRGLIRMVNQRRKLLDYLKGKDTTRYSALIGRLGLRR.

This sequence belongs to the universal ribosomal protein uS15 family. In terms of assembly, part of the 30S ribosomal subunit. Forms a bridge to the 50S subunit in the 70S ribosome, contacting the 23S rRNA.

One of the primary rRNA binding proteins, it binds directly to 16S rRNA where it helps nucleate assembly of the platform of the 30S subunit by binding and bridging several RNA helices of the 16S rRNA. Functionally, forms an intersubunit bridge (bridge B4) with the 23S rRNA of the 50S subunit in the ribosome. The polypeptide is Small ribosomal subunit protein uS15 (Pseudomonas entomophila (strain L48)).